The chain runs to 392 residues: Na(+)/H(+) antiporter NhaA 2 (392 aa).

11 helical membrane passes run 20 to 40, 61 to 81, 99 to 119, 127 to 147, 158 to 178, 181 to 201, 209 to 229, 265 to 285, 298 to 318, 336 to 356, and 365 to 385; these read FFAA…AALI, LSVS…LVGL, ALPG…YVAF, IGGW…VLSL, IFLS…IALF, SDLS…LVAL, LLPY…SGIH, VAFA…LSGI, VALG…ALAI, GVAA…ALAF, and EVKV…VVVL.

The protein belongs to the NhaA Na(+)/H(+) (TC 2.A.33) antiporter family.

It localises to the cell inner membrane. It carries out the reaction Na(+)(in) + 2 H(+)(out) = Na(+)(out) + 2 H(+)(in). Functionally, na(+)/H(+) antiporter that extrudes sodium in exchange for external protons. The protein is Na(+)/H(+) antiporter NhaA 2 of Pseudomonas syringae pv. syringae (strain B728a).